Consider the following 712-residue polypeptide: Ribosomal RNA large subunit methyltransferase K/L (712 aa).

One can recognise a THUMP domain in the interval 43–154 (LAYRITLWTR…NGQLTISMNF (112 aa)).

Belongs to the methyltransferase superfamily. RlmKL family.

The protein localises to the cytoplasm. It catalyses the reaction guanosine(2445) in 23S rRNA + S-adenosyl-L-methionine = N(2)-methylguanosine(2445) in 23S rRNA + S-adenosyl-L-homocysteine + H(+). It carries out the reaction guanosine(2069) in 23S rRNA + S-adenosyl-L-methionine = N(2)-methylguanosine(2069) in 23S rRNA + S-adenosyl-L-homocysteine + H(+). Functionally, specifically methylates the guanine in position 2445 (m2G2445) and the guanine in position 2069 (m7G2069) of 23S rRNA. This is Ribosomal RNA large subunit methyltransferase K/L from Shewanella frigidimarina (strain NCIMB 400).